A 501-amino-acid chain; its full sequence is ATP synthase subunit alpha (501 aa).

169–176 (GDRQTGKT) lines the ATP pocket.

The protein belongs to the ATPase alpha/beta chains family. F-type ATPases have 2 components, CF(1) - the catalytic core - and CF(0) - the membrane proton channel. CF(1) has five subunits: alpha(3), beta(3), gamma(1), delta(1), epsilon(1). CF(0) has three main subunits: a(1), b(2) and c(9-12). The alpha and beta chains form an alternating ring which encloses part of the gamma chain. CF(1) is attached to CF(0) by a central stalk formed by the gamma and epsilon chains, while a peripheral stalk is formed by the delta and b chains.

It localises to the cell membrane. It carries out the reaction ATP + H2O + 4 H(+)(in) = ADP + phosphate + 5 H(+)(out). In terms of biological role, produces ATP from ADP in the presence of a proton gradient across the membrane. The alpha chain is a regulatory subunit. The protein is ATP synthase subunit alpha of Streptococcus pneumoniae (strain 70585).